An 86-amino-acid chain; its full sequence is Large ribosomal subunit protein bL27 (86 aa).

A compositionally biased stretch (gly residues) spans 1–10 (MAQKKGGGST). Residues 1–20 (MAQKKGGGSTRNGRDSESKR) form a disordered region.

Belongs to the bacterial ribosomal protein bL27 family.

The protein is Large ribosomal subunit protein bL27 of Bordetella avium (strain 197N).